Here is a 224-residue protein sequence, read N- to C-terminus: uncharacterized protein (224 aa).

The protein resides in the virion. This is an uncharacterized protein from Acanthamoeba polyphaga mimivirus (APMV).